Consider the following 123-residue polypeptide: Probable prefoldin subunit 4 (123 aa).

This sequence belongs to the prefoldin subunit beta family. As to quaternary structure, heterohexamer of two PFD-alpha type and four PFD-beta type subunits.

Functionally, binds specifically to cytosolic chaperonin (c-CPN) and transfers target proteins to it. Binds to nascent polypeptide chain and promotes folding in an environment in which there are many competing pathways for nonnative proteins. In Schizosaccharomyces pombe (strain 972 / ATCC 24843) (Fission yeast), this protein is Probable prefoldin subunit 4.